Here is a 449-residue protein sequence, read N- to C-terminus: 3-phosphoshikimate 1-carboxyvinyltransferase (449 aa).

The disordered stretch occupies residues 1-30; it reads MSHDSSPQPLTAAPGAPLRGRLRPPGDKSI. Positions 28, 29, and 33 each coordinate 3-phosphoshikimate. Phosphoenolpyruvate is bound at residue K28. Positions 101 and 129 each coordinate phosphoenolpyruvate. 3-phosphoshikimate is bound by residues S175, Q177, D330, and K357. Phosphoenolpyruvate is bound at residue Q177. D330 serves as the catalytic Proton acceptor. Residues R361 and R405 each contribute to the phosphoenolpyruvate site.

It belongs to the EPSP synthase family. In terms of assembly, monomer.

The protein resides in the cytoplasm. The catalysed reaction is 3-phosphoshikimate + phosphoenolpyruvate = 5-O-(1-carboxyvinyl)-3-phosphoshikimate + phosphate. It functions in the pathway metabolic intermediate biosynthesis; chorismate biosynthesis; chorismate from D-erythrose 4-phosphate and phosphoenolpyruvate: step 6/7. In terms of biological role, catalyzes the transfer of the enolpyruvyl moiety of phosphoenolpyruvate (PEP) to the 5-hydroxyl of shikimate-3-phosphate (S3P) to produce enolpyruvyl shikimate-3-phosphate and inorganic phosphate. In Methylobacterium radiotolerans (strain ATCC 27329 / DSM 1819 / JCM 2831 / NBRC 15690 / NCIMB 10815 / 0-1), this protein is 3-phosphoshikimate 1-carboxyvinyltransferase.